The primary structure comprises 201 residues: Transmembrane 4 L6 family member 18 (201 aa).

Residues 1-9 (MGSRKCGSC) are Cytoplasmic-facing. The chain crosses the membrane as a helical span at residues 10-30 (LSSLLIPLALWSIIVNILLYF). The Extracellular portion of the chain corresponds to 31-49 (PNGQASYASSNKLTNYVWY). Residues 50 to 70 (FEGICFSGIMMLVVAAVLLVL) form a helical membrane-spanning segment. Residues 71–93 (ENDNNYKCCQSENCSKKYMTVLS) lie on the Cytoplasmic side of the membrane. Residues 94–114 (MIFSALGIAFSGYCLVISALG) traverse the membrane as a helical segment. The Extracellular portion of the chain corresponds to 115–157 (LLQGPYCRTLDGWEYAFEGTAGRFLTDSREWIQCLEPAHVVEW). The chain crosses the membrane as a helical span at residues 158–178 (NIILFSILIALSGLQVIVCLI). Residues 179 to 201 (RVVIQLSKSLCGTYSVIIQPGII) lie on the Cytoplasmic side of the membrane.

This sequence belongs to the L6 tetraspanin family.

The protein localises to the membrane. This is Transmembrane 4 L6 family member 18 (TM4SF18) from Bos taurus (Bovine).